The chain runs to 179 residues: Large ribosomal subunit protein uL5 (179 aa).

It belongs to the universal ribosomal protein uL5 family. As to quaternary structure, part of the 50S ribosomal subunit; part of the 5S rRNA/L5/L18/L25 subcomplex. Contacts the 5S rRNA and the P site tRNA. Forms a bridge to the 30S subunit in the 70S ribosome.

In terms of biological role, this is one of the proteins that bind and probably mediate the attachment of the 5S RNA into the large ribosomal subunit, where it forms part of the central protuberance. In the 70S ribosome it contacts protein S13 of the 30S subunit (bridge B1b), connecting the 2 subunits; this bridge is implicated in subunit movement. Contacts the P site tRNA; the 5S rRNA and some of its associated proteins might help stabilize positioning of ribosome-bound tRNAs. This Desulforapulum autotrophicum (strain ATCC 43914 / DSM 3382 / VKM B-1955 / HRM2) (Desulfobacterium autotrophicum) protein is Large ribosomal subunit protein uL5.